Consider the following 59-residue polypeptide: Zinc finger protein HVO_2753 (59 aa).

Short sequence motifs (c(P)XCG motif) lie at residues C12–G16, C29–G33, C39–R43, and C51–G55. Zn(2+) contacts are provided by C29 and C32. Positions 51 and 54 each coordinate Zn(2+).

Monomer in solution.

Zinc-binding protein that binds only one zinc ion. Is required for swarming and biofilm formation. This Haloferax volcanii (strain ATCC 29605 / DSM 3757 / JCM 8879 / NBRC 14742 / NCIMB 2012 / VKM B-1768 / DS2) (Halobacterium volcanii) protein is Zinc finger protein HVO_2753.